Consider the following 636-residue polypeptide: 1-deoxy-D-xylulose-5-phosphate synthase (636 aa).

Thiamine diphosphate contacts are provided by residues H72 and 113–115 (GHA). D144 contributes to the Mg(2+) binding site. Residues 145-146 (GA), N174, Y287, and E370 each bind thiamine diphosphate. N174 provides a ligand contact to Mg(2+).

The protein belongs to the transketolase family. DXPS subfamily. As to quaternary structure, homodimer. Requires Mg(2+) as cofactor. It depends on thiamine diphosphate as a cofactor.

The catalysed reaction is D-glyceraldehyde 3-phosphate + pyruvate + H(+) = 1-deoxy-D-xylulose 5-phosphate + CO2. It functions in the pathway metabolic intermediate biosynthesis; 1-deoxy-D-xylulose 5-phosphate biosynthesis; 1-deoxy-D-xylulose 5-phosphate from D-glyceraldehyde 3-phosphate and pyruvate: step 1/1. Its function is as follows. Catalyzes the acyloin condensation reaction between C atoms 2 and 3 of pyruvate and glyceraldehyde 3-phosphate to yield 1-deoxy-D-xylulose-5-phosphate (DXP). This chain is 1-deoxy-D-xylulose-5-phosphate synthase, found in Rippkaea orientalis (strain PCC 8801 / RF-1) (Cyanothece sp. (strain PCC 8801)).